We begin with the raw amino-acid sequence, 123 residues long: WAP four-disulfide core domain protein 5 (123 aa).

The signal sequence occupies residues 1–24; the sequence is MRIQSLLLLGVLLAVGSQLPAAFG. 2 consecutive WAP domains span residues 27 to 73 and 74 to 121; these read KGEK…CVPR and ISVK…RDPA. Cystine bridges form between C34–C62, C41–C66, C49–C61, C55–C70, C81–C109, C88–C113, C96–C108, and C102–C117.

The protein resides in the secreted. Functionally, putative acid-stable proteinase inhibitor. The chain is WAP four-disulfide core domain protein 5 (WFDC5) from Callithrix jacchus (White-tufted-ear marmoset).